The sequence spans 458 residues: ATP synthase subunit beta (458 aa).

ATP is bound at residue 148 to 155; it reads GGAGVGKT.

It belongs to the ATPase alpha/beta chains family. F-type ATPases have 2 components, CF(1) - the catalytic core - and CF(0) - the membrane proton channel. CF(1) has five subunits: alpha(3), beta(3), gamma(1), delta(1), epsilon(1). CF(0) has three main subunits: a(1), b(2) and c(9-12). The alpha and beta chains form an alternating ring which encloses part of the gamma chain. CF(1) is attached to CF(0) by a central stalk formed by the gamma and epsilon chains, while a peripheral stalk is formed by the delta and b chains.

Its subcellular location is the cell inner membrane. The enzyme catalyses ATP + H2O + 4 H(+)(in) = ADP + phosphate + 5 H(+)(out). Its function is as follows. Produces ATP from ADP in the presence of a proton gradient across the membrane. The catalytic sites are hosted primarily by the beta subunits. The polypeptide is ATP synthase subunit beta (Pseudomonas aeruginosa (strain LESB58)).